We begin with the raw amino-acid sequence, 106 residues long: Integration host factor subunit alpha (106 aa).

Belongs to the bacterial histone-like protein family. Heterodimer of an alpha and a beta chain.

Its function is as follows. This protein is one of the two subunits of integration host factor, a specific DNA-binding protein that functions in genetic recombination as well as in transcriptional and translational control. The polypeptide is Integration host factor subunit alpha (Nitrobacter winogradskyi (strain ATCC 25391 / DSM 10237 / CIP 104748 / NCIMB 11846 / Nb-255)).